Here is a 21-residue protein sequence, read N- to C-terminus: Thanatin (21 aa).

Cys-11 and Cys-18 are joined by a disulfide.

It is found in the secreted. In terms of biological role, insect defense peptide with a broad spectrum of activity against Gram-positive and Gram-negative bacteria and fungi. No activity against S.aureus. Stops respiration in bacteria but does not permeabilize their inner membranes. The polypeptide is Thanatin (Podisus maculiventris (Spined soldier bug)).